The chain runs to 221 residues: Ribosomal RNA small subunit methyltransferase Nep1 (221 aa).

S-adenosyl-L-methionine is bound by residues Gly-174, Gly-179, and Val-196–Leu-201.

It belongs to the class IV-like SAM-binding methyltransferase superfamily. RNA methyltransferase NEP1 family. Homodimer.

It carries out the reaction a pseudouridine in rRNA + S-adenosyl-L-methionine = an N(1)-methylpseudouridine in rRNA + S-adenosyl-L-homocysteine + H(+). In terms of biological role, methyltransferase involved in ribosomal biogenesis. Specifically catalyzes the N1-methylation of the pseudouridine corresponding to position 914 in M.jannaschii 16S rRNA. The polypeptide is Ribosomal RNA small subunit methyltransferase Nep1 (Pyrobaculum neutrophilum (strain DSM 2338 / JCM 9278 / NBRC 100436 / V24Sta) (Thermoproteus neutrophilus)).